Reading from the N-terminus, the 394-residue chain is Ribose-phosphate pyrophosphokinase 5, chloroplastic (394 aa).

The N-terminal 33 residues, 1-33, are a transit peptide targeting the chloroplast; the sequence is MASIVQPSPTFPALNLRRSSLIRPPSSVRFPLK. Residues Asp-202, His-204, Asp-213, and Asp-217 each contribute to the Mg(2+) site. A binding of phosphoribosylpyrophosphate region spans residues 288–303; that stretch reads GKVAIMVDDMIDTAGT.

The protein belongs to the ribose-phosphate pyrophosphokinase family.

Its subcellular location is the plastid. It localises to the chloroplast. It catalyses the reaction D-ribose 5-phosphate + ATP = 5-phospho-alpha-D-ribose 1-diphosphate + AMP + H(+). The protein is Ribose-phosphate pyrophosphokinase 5, chloroplastic (PRS5) of Arabidopsis thaliana (Mouse-ear cress).